The sequence spans 414 residues: Lactosylceramide alpha-2,3-sialyltransferase (414 aa).

The Cytoplasmic portion of the chain corresponds to 1 to 65 (MHTEAVGGAA…MRRPSLLIKD (65 aa)). A helical; Signal-anchor for type II membrane protein transmembrane segment spans residues 66-86 (ICKCTLVAFGVWLLYILILNY). Residues 87 to 414 (TAEECDMKRM…VVEDLSGGIH (328 aa)) lie on the Lumenal side of the membrane. Cys-194 and Cys-352 are oxidised to a cystine. N-linked (GlcNAc...) asparagine glycosylation is found at Asn-235, Asn-279, and Asn-389.

It belongs to the glycosyltransferase 29 family. In terms of tissue distribution, mainly expressed in brain, and then testis, heart and liver, almost all tissues showed some levels of the gene expression.

The protein resides in the golgi apparatus membrane. It catalyses the reaction a beta-D-Gal-(1-&gt;4)-beta-D-Glc-(1&lt;-&gt;1)-Cer(d18:1(4E)) + CMP-N-acetyl-beta-neuraminate = a ganglioside GM3 (d18:1(4E)) + CMP + H(+). The enzyme catalyses ganglioside GA2 (d18:1(4E)/18:0) + CMP-N-acetyl-beta-neuraminate = ganglioside GM2 (d18:1(4E)/18:0) + CMP + H(+). The catalysed reaction is a beta-D-Gal-(1&lt;-&gt;1')-ceramide + CMP-N-acetyl-beta-neuraminate = N-acetyl-alpha-neuraminosyl-(2-&gt;3)-beta-D-galactosyl-(1&lt;-&gt;1')-ceramide + CMP + H(+). It carries out the reaction ganglioside GA1 (d18:1(4E)/18:0) + CMP-N-acetyl-beta-neuraminate = ganglioside GM1 (d18:1(4E)/18:0) + CMP + H(+). Functionally, (Microbial infection) Gangliosides GD1b and GT1b (derived from GM3) may serve as receptors for some C.botulinum neurotoxins (minimally types BoNT/A, B, C). Transfers the sialyl group (N-acetyl-alpha-neuraminyl or NeuAc) from CMP-NeuAc to the non-reducing terminal galactose (Gal) of glycosphingolipids forming gangliosides (important molecules involved in the regulation of multiple cellular processes, including cell proliferation and differentiation, apoptosis, embryogenesis, development, and oncogenesis). Mainly involved in the biosynthesis of ganglioside GM3 but can also use different glycolipids as substrate acceptors such as D-galactosylceramide (GalCer), asialo-GM2 (GA2) and asialo-GM1 (GA1), although less preferentially than beta-D-Gal-(1-&gt;4)-beta-D-Glc-(1&lt;-&gt;1)-Cer (LacCer). The protein is Lactosylceramide alpha-2,3-sialyltransferase (St3gal5) of Mus musculus (Mouse).